Reading from the N-terminus, the 339-residue chain is HTH-type transcriptional regulator SyrM 2 (339 aa).

Residues 32–89 (VDLNLLVELEALLQYRNITHAAQHVGRSQPAMSRALSRLRDMFNDDLLVRGSSGLVPT) form the HTH lysR-type domain. The H-T-H motif DNA-binding region spans 49–68 (ITHAAQHVGRSQPAMSRALS).

Belongs to the LysR transcriptional regulatory family.

Its function is as follows. Acts in trans to stimulate nod gene expression. The sequence is that of HTH-type transcriptional regulator SyrM 2 (syrM2) from Sinorhizobium fredii (strain NBRC 101917 / NGR234).